The sequence spans 649 residues: Acetyl-coenzyme A synthetase (649 aa).

Residues 191 to 194, Thr-311, and Asn-335 contribute to the CoA site; that span reads RGGR. Residues 387–389, 411–416, Asp-500, and Arg-515 contribute to the ATP site; these read GEP and DTWWQT. Ser-523 serves as a coordination point for CoA. Residue Arg-526 participates in ATP binding. Residues Val-537, His-539, and Ile-542 each contribute to the Mg(2+) site. CoA is bound at residue Arg-584. Lys-609 is subject to N6-acetyllysine.

It belongs to the ATP-dependent AMP-binding enzyme family. Requires Mg(2+) as cofactor. In terms of processing, acetylated. Deacetylation by the SIR2-homolog deacetylase activates the enzyme.

It carries out the reaction acetate + ATP + CoA = acetyl-CoA + AMP + diphosphate. Catalyzes the conversion of acetate into acetyl-CoA (AcCoA), an essential intermediate at the junction of anabolic and catabolic pathways. AcsA undergoes a two-step reaction. In the first half reaction, AcsA combines acetate with ATP to form acetyl-adenylate (AcAMP) intermediate. In the second half reaction, it can then transfer the acetyl group from AcAMP to the sulfhydryl group of CoA, forming the product AcCoA. The polypeptide is Acetyl-coenzyme A synthetase (Psychromonas ingrahamii (strain DSM 17664 / CCUG 51855 / 37)).